The primary structure comprises 251 residues: tRNA (guanine-N(1)-)-methyltransferase (251 aa).

Residues glycine 113 and 133 to 138 each bind S-adenosyl-L-methionine; that span reads MGDYVL.

This sequence belongs to the RNA methyltransferase TrmD family. Homodimer.

It is found in the cytoplasm. It carries out the reaction guanosine(37) in tRNA + S-adenosyl-L-methionine = N(1)-methylguanosine(37) in tRNA + S-adenosyl-L-homocysteine + H(+). Its function is as follows. Specifically methylates guanosine-37 in various tRNAs. The polypeptide is tRNA (guanine-N(1)-)-methyltransferase (Sodalis glossinidius (strain morsitans)).